Consider the following 353-residue polypeptide: Photosystem II protein D1 (353 aa).

At Thr-2 the chain carries N-acetylthreonine. Residue Thr-2 is modified to Phosphothreonine. The next 3 membrane-spanning stretches (helical) occupy residues 29 to 46 (YIGW…TATS), 118 to 133 (HFFI…EWEL), and 142 to 156 (WIAV…AATA). His-118 is a chlorophyll a binding site. Tyr-126 lines the pheophytin a pocket. Residues Asp-170 and Glu-189 each coordinate [CaMn4O5] cluster. The helical transmembrane segment at 197–218 (FHMLGVAGVFGGSLFSAMHGSL) threads the bilayer. His-198 contacts chlorophyll a. A quinone-binding positions include His-215 and 264–265 (SF). A Fe cation-binding site is contributed by His-215. Residue His-272 participates in Fe cation binding. Residues 274 to 288 (FLAIWPVVGIWFTAL) traverse the membrane as a helical segment. [CaMn4O5] cluster is bound by residues His-332, Glu-333, Asp-342, and Ala-344. Positions 345–353 (SVEAPSING) are excised as a propeptide.

Belongs to the reaction center PufL/M/PsbA/D family. PSII is composed of 1 copy each of membrane proteins PsbA, PsbB, PsbC, PsbD, PsbE, PsbF, PsbH, PsbI, PsbJ, PsbK, PsbL, PsbM, PsbT, PsbX, PsbY, PsbZ, Psb30/Ycf12, at least 3 peripheral proteins of the oxygen-evolving complex and a large number of cofactors. It forms dimeric complexes. The D1/D2 heterodimer binds P680, chlorophylls that are the primary electron donor of PSII, and subsequent electron acceptors. It shares a non-heme iron and each subunit binds pheophytin, quinone, additional chlorophylls, carotenoids and lipids. D1 provides most of the ligands for the Mn4-Ca-O5 cluster of the oxygen-evolving complex (OEC). There is also a Cl(-1) ion associated with D1 and D2, which is required for oxygen evolution. The PSII complex binds additional chlorophylls, carotenoids and specific lipids. serves as cofactor. Post-translationally, tyr-161 forms a radical intermediate that is referred to as redox-active TyrZ, YZ or Y-Z. C-terminally processed by CTPA; processing is essential to allow assembly of the oxygen-evolving complex and thus photosynthetic growth.

It is found in the plastid. Its subcellular location is the chloroplast thylakoid membrane. The catalysed reaction is 2 a plastoquinone + 4 hnu + 2 H2O = 2 a plastoquinol + O2. Its function is as follows. Photosystem II (PSII) is a light-driven water:plastoquinone oxidoreductase that uses light energy to abstract electrons from H(2)O, generating O(2) and a proton gradient subsequently used for ATP formation. It consists of a core antenna complex that captures photons, and an electron transfer chain that converts photonic excitation into a charge separation. The D1/D2 (PsbA/PsbD) reaction center heterodimer binds P680, the primary electron donor of PSII as well as several subsequent electron acceptors. This is Photosystem II protein D1 from Stigeoclonium helveticum (Green alga).